A 755-amino-acid chain; its full sequence is Anaphase-promoting complex subunit 5 (755 aa).

The residue at position 195 (Ser195) is a Phosphoserine. TPR repeat units follow at residues Gln209 to Asp249, Phe250 to Leu300, Arg301 to His337, Val338 to Ser378, Leu379 to Ile418, Asp419 to Phe466, Ala467 to Asn500, Ser501 to Ser540, Ile541 to Val580, Ile581 to Ala620, Ser621 to Lys660, Gly661 to Glu696, and Ala697 to Leu736. Thr232 is subject to Phosphothreonine.

This sequence belongs to the APC5 family. In terms of assembly, the mammalian APC/C is composed at least of 14 distinct subunits ANAPC1, ANAPC2, CDC27/APC3, ANAPC4, ANAPC5, CDC16/APC6, ANAPC7, CDC23/APC8, ANAPC10, ANAPC11, CDC26/APC12, ANAPC13, ANAPC15 and ANAPC16 that assemble into a complex of at least 19 chains with a combined molecular mass of around 1.2 MDa; APC/C interacts with FZR1 and FBXO5.

The protein resides in the nucleus. The protein localises to the cytoplasm. Its subcellular location is the cytoskeleton. It is found in the spindle. It functions in the pathway protein modification; protein ubiquitination. In terms of biological role, component of the anaphase promoting complex/cyclosome (APC/C), a cell cycle-regulated E3 ubiquitin ligase that controls progression through mitosis and the G1 phase of the cell cycle. The APC/C complex acts by mediating ubiquitination and subsequent degradation of target proteins: it mainly mediates the formation of 'Lys-11'-linked polyubiquitin chains and, to a lower extent, the formation of 'Lys-48'- and 'Lys-63'-linked polyubiquitin chains. The APC/C complex catalyzes assembly of branched 'Lys-11'-/'Lys-48'-linked branched ubiquitin chains on target proteins. This chain is Anaphase-promoting complex subunit 5 (ANAPC5), found in Homo sapiens (Human).